Reading from the N-terminus, the 317-residue chain is Melanocyte-stimulating hormone receptor (317 aa).

The Extracellular segment spans residues Met-1–Glu-37. N-linked (GlcNAc...) asparagine glycosylation is present at Asn-29. Residues Val-38–Ile-63 form a helical membrane-spanning segment. Topologically, residues Ala-64–Pro-72 are cytoplasmic. A helical membrane pass occupies residues Met-73–Leu-93. The Extracellular segment spans residues Glu-94–Asn-118. A helical membrane pass occupies residues Val-119–Val-140. The Cytoplasmic segment spans residues Asp-141 to Arg-163. Residues Ala-164–Tyr-183 traverse the membrane as a helical segment. The Extracellular segment spans residues Asp-184–Cys-191. The chain crosses the membrane as a helical span at residues Leu-192 to Leu-211. Residues Val-212–Ala-240 lie on the Cytoplasmic side of the membrane. A helical transmembrane segment spans residues Ala-241 to Leu-266. Topologically, residues Cys-267–Asn-279 are extracellular. Residues Phe-280–Phe-300 traverse the membrane as a helical segment. Residues Arg-301 to Trp-317 lie on the Cytoplasmic side of the membrane. Cys-315 carries S-palmitoyl cysteine lipidation.

The protein belongs to the G-protein coupled receptor 1 family. Interacts with MGRN1, but does not undergo MGRN1-mediated ubiquitination; this interaction competes with GNAS-binding and thus inhibits agonist-induced cAMP production. Interacts with OPN3; the interaction results in a decrease in MC1R-mediated cAMP signaling and ultimately a decrease in melanin production in melanocytes.

Its subcellular location is the cell membrane. Functionally, receptor for MSH (alpha, beta and gamma) and ACTH. The activity of this receptor is mediated by G proteins which activate adenylate cyclase. Mediates melanogenesis, the production of eumelanin (black/brown) and phaeomelanin (red/yellow), via regulation of cAMP signaling in melanocytes. In Cercopithecus diana (Diana monkey), this protein is Melanocyte-stimulating hormone receptor (MC1R).